The primary structure comprises 517 residues: Beta-glucosidase 1 (517 aa).

A signal peptide spans Met-1–Gly-22. Residues Gln-48, His-145, and Asn-190–Glu-191 contribute to the a beta-D-glucoside site. The Proton donor role is filled by Glu-191. Residues Cys-210 and Cys-217 are joined by a disulfide bond. Asn-216 and Asn-221 each carry an N-linked (GlcNAc...) asparagine glycan. Residues Tyr-333 and Glu-406 each coordinate a beta-D-glucoside. Glu-406 acts as the Nucleophile in catalysis. An N-linked (GlcNAc...) asparagine glycan is attached at Asn-441. A beta-D-glucoside contacts are provided by Trp-451 and Phe-467. Asn-473 and Asn-512 each carry an N-linked (GlcNAc...) asparagine glycan.

It belongs to the glycosyl hydrolase 1 family.

The catalysed reaction is Hydrolysis of terminal, non-reducing beta-D-glucosyl residues with release of beta-D-glucose.. In Arabidopsis thaliana (Mouse-ear cress), this protein is Beta-glucosidase 1.